Reading from the N-terminus, the 664-residue chain is MTIRILPARLANQIAAGEVVERPASVVKELVENSLDSGATKIDIDIEKGGAKLIRIRDNGSGIVKDELGLALSRHATSKIHTLDDLEAIMSLGFRGEALASISSVSRLTLTSRPATQEQAWSAYTEGRDMQVKLQPTAHPIGTTVEVVDLFFNTPARRKFLRTEKTEFAHIDELLKRIALSCFDVSITLRHNGKVIRQYRAAHNDLQAEKRLATVCGQAFVRCMLKIELEHQGLKLHGWITTPEGARQQSDLQYCYVNGRMMRDKLINHAIRQSYETSLKPEQFAAYVLFIELDPHQVDVNVHPAKHEVRFHQARLVHDFIYQALASALAQSDSIEQPQINESAFHYQAEPEVAPQGSFPAESNEVPQAVYHAIEKAPAYPRKAGQEQQLQPVAPLESSFSSEQGREVSPAPHNERKAWMESRSPARHTTSSNQSERYGEPAPSKQQVKAYAELLHTPDFPSQNVECHPSPSIASPVQELGKAVSVVAQRYLLTTTKAGCQLISLARAEFYRTLGQLNGDKAPLKSQPLLVPLSLKLEKGLVHAAQEHQDRFARMGILFKMRNEKALMVMGVPAPLRQQNLQLLIPDLLSYAASQAQKEELAQNDTAMAQWLALRVAKVKSHYTLSEAIQIISELEQLWQEKLPLQDSQLVTSVDFSATIAQLT.

Positions 382-447 are disordered; sequence RKAGQEQQLQ…YGEPAPSKQQ (66 aa). The segment covering 427–436 has biased composition (polar residues); the sequence is RHTTSSNQSE.

The protein belongs to the DNA mismatch repair MutL/HexB family.

Its function is as follows. This protein is involved in the repair of mismatches in DNA. It is required for dam-dependent methyl-directed DNA mismatch repair. May act as a 'molecular matchmaker', a protein that promotes the formation of a stable complex between two or more DNA-binding proteins in an ATP-dependent manner without itself being part of a final effector complex. This Vibrio vulnificus (strain CMCP6) protein is DNA mismatch repair protein MutL.